The primary structure comprises 354 residues: Squamosa promoter-binding-like protein 15 (354 aa).

The disordered stretch occupies residues 1 to 25 (MELLMCSGQAESGGSSSTESSSLSG). Over residues 7-25 (SGQAESGGSSSTESSSLSG) the composition is skewed to low complexity. Residues 56–133 (TARCQVEGCR…ACHNERRRKP (78 aa)) form an SBP-type zinc finger. Residues Cys-59, Cys-64, Cys-81, His-84, Cys-100, Cys-103, His-107, and Cys-119 each contribute to the Zn(2+) site. A Bipartite nuclear localization signal motif is present at residues 116–132 (KRSCRRRLACHNERRRK).

Zn(2+) serves as cofactor.

Its subcellular location is the nucleus. In terms of biological role, trans-acting factor that binds specifically to the consensus nucleotide sequence 5'-TNCGTACAA-3'. The sequence is that of Squamosa promoter-binding-like protein 15 (SPL15) from Arabidopsis thaliana (Mouse-ear cress).